Reading from the N-terminus, the 624-residue chain is MAEASRWHRGGASKHKLHYRKEVEITTTLQELLLYFIFLINLCILTFGMVNPHMYYLNKVMSSLFLDTSVPGEERTNFKSIRSITDFWKFMEGPLLEGLYWDSWYNNQQLYNLKNSSRIYYENILLGVPRVRQLKVRNNTCKVYSSFQSLMSECYGKYTSANEDLSNFGLQINTEWRYSTSNTNSPWHWGFLGVYRNGGYIFTLSKSKSETKNKFIDLRLNSWITRGTRVIFIDFSLYNANVNLFCIIRLVAEFPATGGILTSWQFYSVKLLRYVSYYDYFIASCEITFCIFLFVFTTQEVKKIKEFKSAYFKSIWNWLELLLLLLCFVAVSFNTYYNVQIFLLLGQLLKSTEKYSDFYFLACWHIYYNNIIAITIFFAWIKIFKFISFNKTMSQLSSTLSRCVKDIVGFAIMFFIIFFAYAQLGFLVFGSQVDDFSTFQNSIFAQFRIVLGDFNFAGIQQANPILGPIYFITFIFFVFFVLLNMFLAIINDTYSEVKADYSIGRRLDFELGKMIKQSYKNVLEKFRLKKAQKDEDKKTKGSGDLAEQARREGFDENEIQNAEQMKKWKERLEKKYYSMEIQDDYQPVTQEEFRELFLYAVELEKELHYINLKLNQVVRKVSAL.

The Cytoplasmic segment spans residues 1–31; that stretch reads MAEASRWHRGGASKHKLHYRKEVEITTTLQE. The helical transmembrane segment at 32–52 threads the bilayer; the sequence is LLLYFIFLINLCILTFGMVNP. At 53-276 the chain is on the extracellular side; it reads HMYYLNKVMS…YSVKLLRYVS (224 aa). N-linked (GlcNAc...) asparagine glycans are attached at residues N115 and N138. A helical membrane pass occupies residues 277-297; sequence YYDYFIASCEITFCIFLFVFT. The Cytoplasmic segment spans residues 298 to 314; sequence TQEVKKIKEFKSAYFKS. Residues 315-335 traverse the membrane as a helical segment; that stretch reads IWNWLELLLLLLCFVAVSFNT. Topologically, residues 336 to 360 are extracellular; that stretch reads YYNVQIFLLLGQLLKSTEKYSDFYF. The chain crosses the membrane as a helical span at residues 361–381; the sequence is LACWHIYYNNIIAITIFFAWI. Residues 382–406 are Cytoplasmic-facing; sequence KIFKFISFNKTMSQLSSTLSRCVKD. Residues 407–427 traverse the membrane as a helical segment; the sequence is IVGFAIMFFIIFFAYAQLGFL. The Extracellular segment spans residues 428–469; it reads VFGSQVDDFSTFQNSIFAQFRIVLGDFNFAGIQQANPILGPI. A helical membrane pass occupies residues 470-490; it reads YFITFIFFVFFVLLNMFLAII. Residues 491-624 are Cytoplasmic-facing; the sequence is NDTYSEVKAD…NQVVRKVSAL (134 aa). The stretch at 556–576 forms a coiled coil; the sequence is ENEIQNAEQMKKWKERLEKKY.

This sequence belongs to the polycystin family. Interacts with TRPC1 and TRPC5. Expressed only in testis. Expressed also in brain and kidney. As to expression, expressed only in transformed lymphoblasts.

The protein resides in the membrane. Its function is as follows. Exhibits a lower single conductance but no spontaneous channel activity. May function as a regulator of calcium channels or a channel component involving Ca2(+) homeostasis. This is Polycystin-2-like protein 2 from Homo sapiens (Human).